A 550-amino-acid chain; its full sequence is Thermosome subunit (550 aa).

The disordered stretch occupies residues 529–550 (KEKEGEKGGGGSEDFSSSSDLD). A compositionally biased stretch (low complexity) spans 541 to 550 (EDFSSSSDLD).

It belongs to the TCP-1 chaperonin family. In terms of assembly, forms an oligomeric complex of eight-membered rings.

Molecular chaperone; binds unfolded polypeptides in vitro, and has a weak ATPase activity. In Pyrococcus abyssi (strain GE5 / Orsay), this protein is Thermosome subunit (ths).